The following is a 251-amino-acid chain: Proteasome subunit alpha type-7 (251 aa).

This sequence belongs to the peptidase T1A family. As to quaternary structure, the 26S proteasome consists of a 20S proteasome core and two 19S regulatory subunits. The 20S proteasome core is composed of 28 subunits that are arranged in four stacked rings, resulting in a barrel-shaped structure. The two end rings are each formed by seven alpha subunits, and the two central rings are each formed by seven beta subunits. The catalytic chamber with the active sites is on the inside of the barrel.

It is found in the cytoplasm. It localises to the nucleus. Functionally, the proteasome is a multicatalytic proteinase complex which is characterized by its ability to cleave peptides with Arg, Phe, Tyr, Leu, and Glu adjacent to the leaving group at neutral or slightly basic pH. The proteasome has an ATP-dependent proteolytic activity. The chain is Proteasome subunit alpha type-7 (psma7) from Carassius auratus (Goldfish).